The chain runs to 370 residues: CCA-adding enzyme (370 aa).

2 residues coordinate ATP: G8 and R11. 2 residues coordinate CTP: G8 and R11. Mg(2+) contacts are provided by D21 and D23. ATP-binding residues include R91, R137, and R140. 3 residues coordinate CTP: R91, R137, and R140.

Belongs to the tRNA nucleotidyltransferase/poly(A) polymerase family. Bacterial CCA-adding enzyme type 2 subfamily. Mg(2+) is required as a cofactor.

It catalyses the reaction a tRNA precursor + 2 CTP + ATP = a tRNA with a 3' CCA end + 3 diphosphate. The enzyme catalyses a tRNA with a 3' CCA end + 2 CTP + ATP = a tRNA with a 3' CCACCA end + 3 diphosphate. Functionally, catalyzes the addition and repair of the essential 3'-terminal CCA sequence in tRNAs without using a nucleic acid template. Adds these three nucleotides in the order of C, C, and A to the tRNA nucleotide-73, using CTP and ATP as substrates and producing inorganic pyrophosphate. tRNA 3'-terminal CCA addition is required both for tRNA processing and repair. Also involved in tRNA surveillance by mediating tandem CCA addition to generate a CCACCA at the 3' terminus of unstable tRNAs. While stable tRNAs receive only 3'-terminal CCA, unstable tRNAs are marked with CCACCA and rapidly degraded. This chain is CCA-adding enzyme, found in Pseudomonas putida (strain W619).